The chain runs to 194 residues: Fe/S biogenesis protein NfuA (194 aa).

[4Fe-4S] cluster is bound by residues C152 and C155.

This sequence belongs to the NfuA family. Homodimer. Requires [4Fe-4S] cluster as cofactor.

Involved in iron-sulfur cluster biogenesis. Binds a 4Fe-4S cluster, can transfer this cluster to apoproteins, and thereby intervenes in the maturation of Fe/S proteins. Could also act as a scaffold/chaperone for damaged Fe/S proteins. The chain is Fe/S biogenesis protein NfuA from Azotobacter vinelandii (strain DJ / ATCC BAA-1303).